A 120-amino-acid chain; its full sequence is Transcription elongation factor 1 homolog (120 aa).

Cys25, Cys28, Cys49, and Cys52 together coordinate Zn(2+). Residues 84-110 (EDDVVQEEEEEVEEEEEEEEEEDDEDD) show a composition bias toward acidic residues. The interval 84-120 (EDDVVQEEEEEVEEEEEEEEEEDDEDDHVSVKRKYNF) is disordered.

This sequence belongs to the ELOF1 family.

The protein localises to the nucleus. In terms of biological role, transcription elongation factor implicated in the maintenance of proper chromatin structure in actively transcribed regions. In Arabidopsis thaliana (Mouse-ear cress), this protein is Transcription elongation factor 1 homolog.